The chain runs to 209 residues: Orotate phosphoribosyltransferase (209 aa).

Residues R96, K100, H102, and 122–130 contribute to the 5-phospho-alpha-D-ribose 1-diphosphate site; that span reads EDLISTGGS. S126 is an orotate binding site.

It belongs to the purine/pyrimidine phosphoribosyltransferase family. PyrE subfamily. As to quaternary structure, homodimer. It depends on Mg(2+) as a cofactor.

It catalyses the reaction orotidine 5'-phosphate + diphosphate = orotate + 5-phospho-alpha-D-ribose 1-diphosphate. Its pathway is pyrimidine metabolism; UMP biosynthesis via de novo pathway; UMP from orotate: step 1/2. Its function is as follows. Catalyzes the transfer of a ribosyl phosphate group from 5-phosphoribose 1-diphosphate to orotate, leading to the formation of orotidine monophosphate (OMP). The protein is Orotate phosphoribosyltransferase of Streptococcus pyogenes serotype M2 (strain MGAS10270).